The chain runs to 60 residues: Mastoparan-B (60 aa).

An N-terminal signal peptide occupies residues 1–27; it reads MKNTILILFTAFIALLGFFGMSAEALA. AXPX repeat units lie at residues 27 to 30, 31 to 34, 35 to 38, and 41 to 44; these read ADPL, AEPL, ADPN, and ADPE. A propeptide spanning residues 28 to 45 is cleaved from the precursor; sequence DPLAEPLADPNAEADPEA. L59 carries the leucine amide modification.

Belongs to the MCD family. Mastoparan subfamily. As to expression, expressed by the venom gland.

Its subcellular location is the secreted. It localises to the target cell membrane. In terms of biological role, antimicrobial and mast cell degranulating peptide. Has broad spectrum antibacterial activity against both Gram-positive (S.aureus MIC=96-128 ug/ml, S.xylosus MIC=2 ug/ml, S.alactolyticus MIC=32 ug/ml, and S.choleraesuis MIC=32 ug/ml) and Gram-negative bacteria (C.koseri MIC=6 ug/ml, E.coli MIC=3-16 ug/ml, K.pneumoniae MIC=128 ug/ml, P.aerugiosa MIC=128 ug/ml, S.typhimurium MIC=64 ug/ml, V.parahamelytics MIC=32 ug/ml, and S.enterica), as well as on fungi (C.albicans, C.glabrata, and C.neoformans). Does not show antimicrobial activity against S.mutans. Affects membrane permeability of E.coli. Also acts as a mast cell degranulating peptide, that causes liberation of histamine from rat peritoneal mast cells. Its mast cell degranulation activity may be related to the activation of G-protein coupled receptors in mast cells as well as interaction with other proteins located in cell endosomal membranes in the mast cells. Whether this peptide shows hemolytic activities is controversial, as Lin et al., 2011 and Ho et al., 1991 found a hemolytic activity on sheep, chicken and human erythrocytes, whereas Kim et al., 2016 found no hemolytic activity on human erythrocytes. In vivo, induces edema in the rat paw. In Vespa basalis (Hornet), this protein is Mastoparan-B.